A 367-amino-acid polypeptide reads, in one-letter code: NADH-quinone oxidoreductase subunit H (367 aa).

Helical transmembrane passes span 19–39 (ALFIKIIAVIISVMISVAYLV), 87–107 (ICFLIAPIITFTLALLGWAVI), 132–152 (IGVLYILAISSLGVYGIIIAG), 178–198 (IGLTIVTVLLATGSLKLGEIV), 204–224 (MPYWIDLLLLPMACIFFISAL), 266–286 (ILINAMAVIFFFGGWYPPLNI), 291–311 (IIPGIVWFVLKVVALLFCFIW), and 328–348 (GWKVFLPISLLWVVLVSSILV).

Belongs to the complex I subunit 1 family. As to quaternary structure, NDH-1 is composed of 14 different subunits. Subunits NuoA, H, J, K, L, M, N constitute the membrane sector of the complex.

The protein localises to the cell inner membrane. The enzyme catalyses a quinone + NADH + 5 H(+)(in) = a quinol + NAD(+) + 4 H(+)(out). In terms of biological role, NDH-1 shuttles electrons from NADH, via FMN and iron-sulfur (Fe-S) centers, to quinones in the respiratory chain. The immediate electron acceptor for the enzyme in this species is believed to be ubiquinone. Couples the redox reaction to proton translocation (for every two electrons transferred, four hydrogen ions are translocated across the cytoplasmic membrane), and thus conserves the redox energy in a proton gradient. This subunit may bind ubiquinone. This chain is NADH-quinone oxidoreductase subunit H, found in Ehrlichia chaffeensis (strain ATCC CRL-10679 / Arkansas).